Reading from the N-terminus, the 316-residue chain is Melanocyte-stimulating hormone receptor (316 aa).

Residues 1 to 37 (MPMQGAQRKLLGSLNSTPTATSNLGLAANHTGAPCLE) are Extracellular-facing. N-linked (GlcNAc...) asparagine glycosylation is present at N29. A helical membrane pass occupies residues 38–63 (VSIPDGLFLSLGLVSLVENMLVVAAI). At 64-72 (AKNRNLHSP) the chain is on the cytoplasmic side. A helical membrane pass occupies residues 73–93 (MYCFICCLALSDLLVSGSNML). The Extracellular segment spans residues 94–118 (ETAVVVLLEAGALATRASVVQQLHN). The helical transmembrane segment at 119–140 (TIDVLTYSSMLCSLCFVGAIAV) threads the bilayer. At 141 to 163 (DRYISIFYALRYHSIMTLPRVQR) the chain is on the cytoplasmic side. Residues 164 to 183 (VIAAIWVASVTSSTLFITYY) form a helical membrane-spanning segment. The Extracellular segment spans residues 184 to 191 (EHVVALLC). Residues 192-210 (LVVFLTMLVLMAVLYVHML) traverse the membrane as a helical segment. The Cytoplasmic segment spans residues 211 to 239 (ARACQHAQGITRLHKRQPPAHQGFGLRGA). The chain crosses the membrane as a helical span at residues 240–265 (ATLTILLGIFFLCWGPFFLHLTLVVF). Over 266–278 (CPQHLTCSCIFKN) the chain is Extracellular. A helical transmembrane segment spans residues 279-299 (FKVFLTLIICNTIIDPLIYAF). The Cytoplasmic segment spans residues 300–316 (RSQELCRTLKEVLLCSW). C314 is lipidated: S-palmitoyl cysteine.

It belongs to the G-protein coupled receptor 1 family. Interacts with MGRN1, but does not undergo MGRN1-mediated ubiquitination; this interaction competes with GNAS-binding and thus inhibits agonist-induced cAMP production. Interacts with OPN3; the interaction results in a decrease in MC1R-mediated cAMP signaling and ultimately a decrease in melanin production in melanocytes.

The protein localises to the cell membrane. Receptor for MSH (alpha, beta and gamma) and ACTH. The activity of this receptor is mediated by G proteins which activate adenylate cyclase. Mediates melanogenesis, the production of eumelanin (black/brown) and phaeomelanin (red/yellow), via regulation of cAMP signaling in melanocytes. The chain is Melanocyte-stimulating hormone receptor (MC1R) from Cebus albifrons (White-fronted capuchin).